The chain runs to 217 residues: Large ribosomal subunit protein bL25 (217 aa).

Positions 178–217 (VVAPTEEPTEEEIEAMEGEQQTEEPEVVGESKEDEEKTEE) are disordered. A compositionally biased stretch (acidic residues) spans 184–205 (EPTEEEIEAMEGEQQTEEPEVV). Over residues 206-217 (GESKEDEEKTEE) the composition is skewed to basic and acidic residues.

Belongs to the bacterial ribosomal protein bL25 family. CTC subfamily. Part of the 50S ribosomal subunit; part of the 5S rRNA/L5/L18/L25 subcomplex. Contacts the 5S rRNA. Binds to the 5S rRNA independently of L5 and L18.

This is one of the proteins that binds to the 5S RNA in the ribosome where it forms part of the central protuberance. This chain is Large ribosomal subunit protein bL25, found in Staphylococcus aureus (strain MRSA252).